The chain runs to 187 residues: MKNCMMADQRGRSILKHQPVVGDEALEFSRGLAPSTFGFRYAAYMDRNHFLPSGRTAVKHIADPTLAYVMTRYRQCHDFVHIITGCGRSIEEELAVKIFEWKHTGLPLGLLSLLGGAPRLAAAQWAHMRLYWEWASRNAPCSRHGEPAVPMYLNVPWEDMLAKEYDEVVAYTGITPLPQFLEKRQQH.

Zn(2+) contacts are provided by His77, Asp78, His81, and Glu93.

The protein belongs to the COQ4 family. In terms of assembly, component of a multi-subunit COQ enzyme complex. The cofactor is Zn(2+).

It is found in the mitochondrion inner membrane. It carries out the reaction a 4-hydroxy-3-methoxy-5-(all-trans-polyprenyl)benzoate + H(+) = a 2-methoxy-6-(all-trans-polyprenyl)phenol + CO2. The protein operates within cofactor biosynthesis; ubiquinone biosynthesis. Its function is as follows. Lyase that catalyzes the C1-decarboxylation of 4-hydroxy-3-methoxy-5-(all-trans-polyprenyl)benzoic acid into 2-methoxy-6-(all-trans-polyprenyl)phenol during ubiquinone biosynthesis. The sequence is that of Ubiquinone biosynthesis protein COQ4 homolog, mitochondrial from Leishmania infantum.